The sequence spans 184 residues: UPF0397 protein SAB2561c (184 aa).

5 helical membrane passes run 11 to 31 (VVAI…VVIP), 44 to 64 (AFLA…TGLV), 77 to 97 (AWWS…WIGL), 111 to 131 (MIYF…LIAP), and 148 to 168 (QGVI…TILL).

It belongs to the UPF0397 family.

Its subcellular location is the cell membrane. The polypeptide is UPF0397 protein SAB2561c (Staphylococcus aureus (strain bovine RF122 / ET3-1)).